The chain runs to 273 residues: Dermonecrotic toxin LdSicTox-alphaIB1bii (273 aa).

The active site involves H5. Mg(2+)-binding residues include E25 and D27. Catalysis depends on H41, which acts as the Nucleophile. Intrachain disulfides connect C45–C51 and C47–C190. D85 is a Mg(2+) binding site. A glycan (N-linked (GlcNAc...) asparagine) is linked at N250.

This sequence belongs to the arthropod phospholipase D family. Class II subfamily. The cofactor is Mg(2+). In terms of tissue distribution, expressed by the venom gland.

The protein resides in the secreted. It carries out the reaction an N-(acyl)-sphingosylphosphocholine = an N-(acyl)-sphingosyl-1,3-cyclic phosphate + choline. The catalysed reaction is an N-(acyl)-sphingosylphosphoethanolamine = an N-(acyl)-sphingosyl-1,3-cyclic phosphate + ethanolamine. The enzyme catalyses a 1-acyl-sn-glycero-3-phosphocholine = a 1-acyl-sn-glycero-2,3-cyclic phosphate + choline. It catalyses the reaction a 1-acyl-sn-glycero-3-phosphoethanolamine = a 1-acyl-sn-glycero-2,3-cyclic phosphate + ethanolamine. Functionally, dermonecrotic toxins cleave the phosphodiester linkage between the phosphate and headgroup of certain phospholipids (sphingolipid and lysolipid substrates), forming an alcohol (often choline) and a cyclic phosphate. This toxin acts on sphingomyelin (SM). It may also act on ceramide phosphoethanolamine (CPE), lysophosphatidylcholine (LPC) and lysophosphatidylethanolamine (LPE), but not on lysophosphatidylserine (LPS), and lysophosphatidylglycerol (LPG). It acts by transphosphatidylation, releasing exclusively cyclic phosphate products as second products. Induces dermonecrosis, hemolysis, increased vascular permeability, edema, inflammatory response, and platelet aggregation. This is Dermonecrotic toxin LdSicTox-alphaIB1bii from Loxosceles deserta (Desert recluse spider).